The following is a 404-amino-acid chain: Cysteine desulfurase IscS (404 aa).

Residues Ala75 to Thr76, Asn155, Gln183, and Thr203 to His205 each bind pyridoxal 5'-phosphate. Position 206 is an N6-(pyridoxal phosphate)lysine (Lys206). Thr243 is a pyridoxal 5'-phosphate binding site. The active-site Cysteine persulfide intermediate is Cys328. [2Fe-2S] cluster is bound at residue Cys328.

This sequence belongs to the class-V pyridoxal-phosphate-dependent aminotransferase family. NifS/IscS subfamily. Homodimer. Forms a heterotetramer with IscU, interacts with other sulfur acceptors. Pyridoxal 5'-phosphate serves as cofactor.

The protein localises to the cytoplasm. It catalyses the reaction (sulfur carrier)-H + L-cysteine = (sulfur carrier)-SH + L-alanine. Its pathway is cofactor biosynthesis; iron-sulfur cluster biosynthesis. In terms of biological role, master enzyme that delivers sulfur to a number of partners involved in Fe-S cluster assembly, tRNA modification or cofactor biosynthesis. Catalyzes the removal of elemental sulfur atoms from cysteine to produce alanine. Functions as a sulfur delivery protein for Fe-S cluster synthesis onto IscU, an Fe-S scaffold assembly protein, as well as other S acceptor proteins. This Photobacterium profundum (strain SS9) protein is Cysteine desulfurase IscS.